The sequence spans 236 residues: NAD-dependent protein deacetylase (236 aa).

The region spanning 1 to 236 (MIKDWLQESN…EFLRSISNEG (236 aa)) is the Deacetylase sirtuin-type domain. Alanine 18, threonine 22, phenylalanine 29, arginine 30, glutamine 96, valine 98, aspartate 99, and histidine 114 together coordinate NAD(+). Phenylalanine 29 is a binding site for nicotinamide. Valine 98 and aspartate 99 together coordinate nicotinamide. The active-site Proton acceptor is the histidine 114. Zn(2+)-binding residues include cysteine 122, cysteine 125, cysteine 141, and cysteine 143. The NAD(+) site is built by serine 181, serine 182, asparagine 206, and isoleucine 225.

The protein belongs to the sirtuin family. Class U subfamily. The cofactor is Zn(2+).

It localises to the cytoplasm. The catalysed reaction is N(6)-acetyl-L-lysyl-[protein] + NAD(+) + H2O = 2''-O-acetyl-ADP-D-ribose + nicotinamide + L-lysyl-[protein]. Its function is as follows. NAD-dependent protein deacetylase which modulates the activities of several enzymes which are inactive in their acetylated form. This Oceanobacillus iheyensis (strain DSM 14371 / CIP 107618 / JCM 11309 / KCTC 3954 / HTE831) protein is NAD-dependent protein deacetylase.